The primary structure comprises 417 residues: Serine hydroxymethyltransferase 1 (417 aa).

Residues L121 and 125 to 127 contribute to the (6S)-5,6,7,8-tetrahydrofolate site; that span reads GHL. K230 is modified (N6-(pyridoxal phosphate)lysine). Residue 355–357 coordinates (6S)-5,6,7,8-tetrahydrofolate; sequence SPF.

The protein belongs to the SHMT family. In terms of assembly, homodimer. Requires pyridoxal 5'-phosphate as cofactor.

Its subcellular location is the cytoplasm. It carries out the reaction (6R)-5,10-methylene-5,6,7,8-tetrahydrofolate + glycine + H2O = (6S)-5,6,7,8-tetrahydrofolate + L-serine. It functions in the pathway one-carbon metabolism; tetrahydrofolate interconversion. It participates in amino-acid biosynthesis; glycine biosynthesis; glycine from L-serine: step 1/1. Catalyzes the reversible interconversion of serine and glycine with tetrahydrofolate (THF) serving as the one-carbon carrier. This reaction serves as the major source of one-carbon groups required for the biosynthesis of purines, thymidylate, methionine, and other important biomolecules. Also exhibits THF-independent aldolase activity toward beta-hydroxyamino acids, producing glycine and aldehydes, via a retro-aldol mechanism. In Pseudomonas putida (strain ATCC 47054 / DSM 6125 / CFBP 8728 / NCIMB 11950 / KT2440), this protein is Serine hydroxymethyltransferase 1.